The following is a 1235-amino-acid chain: ATP-dependent helicase/nuclease subunit A (1235 aa).

The UvrD-like helicase ATP-binding domain occupies 12–482 (SLWTDDQWKA…IDLSQNFRSR (471 aa)). Position 33–40 (33–40 (AAAGSGKT)) interacts with ATP. Residues 509–800 (AAELTLGASF…RMMTIHASKG (292 aa)) form the UvrD-like helicase C-terminal domain.

Belongs to the helicase family. AddA subfamily. In terms of assembly, heterodimer of AddA and AddB/RexB. Mg(2+) serves as cofactor.

It carries out the reaction Couples ATP hydrolysis with the unwinding of duplex DNA by translocating in the 3'-5' direction.. It catalyses the reaction ATP + H2O = ADP + phosphate + H(+). The heterodimer acts as both an ATP-dependent DNA helicase and an ATP-dependent, dual-direction single-stranded exonuclease. Recognizes the chi site generating a DNA molecule suitable for the initiation of homologous recombination. The AddA nuclease domain is required for chi fragment generation; this subunit has the helicase and 3' -&gt; 5' nuclease activities. In Listeria monocytogenes serotype 4b (strain F2365), this protein is ATP-dependent helicase/nuclease subunit A.